Consider the following 472-residue polypeptide: E3 ubiquitin-protein ligase MYLIP-A (472 aa).

Residues 1–279 (MLCHVTRPDA…ETHAFYRCDT (279 aa)) enclose the FERM domain. An RING-type zinc finger spans residues 384 to 419 (CMLCCEEEIDAAFCPCGHMVCCQNCAAQLQSCPVCR).

In terms of assembly, interacts with anxa5. As to expression, ubiquitous.

The protein localises to the cytoplasm. It is found in the cytosol. The enzyme catalyses S-ubiquitinyl-[E2 ubiquitin-conjugating enzyme]-L-cysteine + [acceptor protein]-L-lysine = [E2 ubiquitin-conjugating enzyme]-L-cysteine + N(6)-ubiquitinyl-[acceptor protein]-L-lysine.. Its pathway is protein modification; protein ubiquitination. In terms of biological role, E3 ubiquitin-protein ligase that mediates ubiquitination and subsequent proteasomal degradation of myosin regulatory light chain (MRLC). Regulates cell movements during gastrulation by acting downstream of fz7 to antagonize the frizzled-signaling pathway. This Danio rerio (Zebrafish) protein is E3 ubiquitin-protein ligase MYLIP-A (mylipa).